Reading from the N-terminus, the 606-residue chain is ATP-dependent rRNA helicase SPB4 (606 aa).

Residues 7 to 35 (WDNLGFSLLPWIRTGLDVMGFETMTPVQA) carry the Q motif motif. Positions 38–224 (IPMLAGNKDV…KTGLRNPVRI (187 aa)) constitute a Helicase ATP-binding domain. Position 51-58 (51-58 (SVTGSGKT)) interacts with ATP. Positions 172 to 175 (DEAD) match the DEAD box motif. Residues 248-404 (KLQLLVSILN…ELDLEVKGIT (157 aa)) enclose the Helicase C-terminal domain. The residue at position 254 (Ser-254) is a Phosphoserine. A coiled-coil region spans residues 539–582 (KTLTKERKLERKEKMSLKRKAIEEELKAEELDENAEEERIKEDW).

It belongs to the DEAD box helicase family. DDX55/SPB4 subfamily. Component of pre-60S ribosomal complexes.

Its subcellular location is the nucleus. It localises to the nucleolus. It catalyses the reaction ATP + H2O = ADP + phosphate + H(+). In terms of biological role, ATP-binding RNA helicase involved in the biogenesis of 60S ribosomal subunits. Binds 90S pre-ribosomal particles and dissociates from pre-60S ribosomal particles after processing of 27SB pre-rRNA. Required for the normal formation of 18S rRNA through the processing of pre-rRNAs at sites A0, A1 and A2, and the normal formation of 25S and 5.8S rRNAs through the processing of pre-rRNAs at sites C1 and C2. Also required for recruitment of NOG2 to pre-ribosomes. In Saccharomyces cerevisiae (strain ATCC 204508 / S288c) (Baker's yeast), this protein is ATP-dependent rRNA helicase SPB4.